Here is a 179-residue protein sequence, read N- to C-terminus: Large ribosomal subunit protein uL5 (179 aa).

This sequence belongs to the universal ribosomal protein uL5 family. As to quaternary structure, part of the 50S ribosomal subunit; part of the 5S rRNA/L5/L18/L25 subcomplex. Contacts the 5S rRNA and the P site tRNA. Forms a bridge to the 30S subunit in the 70S ribosome.

Functionally, this is one of the proteins that bind and probably mediate the attachment of the 5S RNA into the large ribosomal subunit, where it forms part of the central protuberance. In the 70S ribosome it contacts protein S13 of the 30S subunit (bridge B1b), connecting the 2 subunits; this bridge is implicated in subunit movement. Contacts the P site tRNA; the 5S rRNA and some of its associated proteins might help stabilize positioning of ribosome-bound tRNAs. This is Large ribosomal subunit protein uL5 from Shewanella pealeana (strain ATCC 700345 / ANG-SQ1).